The chain runs to 397 residues: Lysophospholipid transporter LplT (397 aa).

Residues 1–17 lie on the Periplasmic side of the membrane; that stretch reads MSESVHTNTSLWSKGMK. A helical membrane pass occupies residues 18 to 38; it reads AVIVAQFLSAFGDNALLFATL. At 39-52 the chain is on the cytoplasmic side; that stretch reads ALLNAQFYPEWSQP. A helical membrane pass occupies residues 53-73; it reads ILQMVFVGAYILFAPFVGQVA. Residues 74–90 are Periplasmic-facing; that stretch reads DSFAKGRVMMFANGLKL. A helical membrane pass occupies residues 91–111; that stretch reads LGAASICFGINPFLGYTLVGV. Topologically, residues 112-144 are cytoplasmic; the sequence is GAAAYSPAKYGILGELTTGSKLVKANGLMEAST. A helical transmembrane segment spans residues 145 to 165; that stretch reads IAAILLGSVAGGVLADWHVLV. Residue Ala166 is a topological domain, periplasmic. A helical membrane pass occupies residues 167–187; the sequence is LAACALAYGGAVVANIYIPKL. Residues 188-226 lie on the Cytoplasmic side of the membrane; the sequence is AAARPGQSWNLINMTRSFLNACTSLWRNGETRFSLVGTS. The helical transmembrane segment at 227-247 threads the bilayer; sequence LFWGAGVTLRFLLVLWVPVAL. Topologically, residues 248–256 are periplasmic; that stretch reads GITDNATPT. A helical transmembrane segment spans residues 257–277; it reads YLNAMVAIGIVVGAGAAAKLV. Topologically, residues 278–280 are cytoplasmic; it reads TLE. Residues 281-301 form a helical membrane-spanning segment; the sequence is TVSRCMPAGILIGVVVLIFSL. Over 302 to 304 the chain is Periplasmic; sequence QHE. A helical transmembrane segment spans residues 305–325; that stretch reads LLPAYALLMLIGVMGGFFVVP. At 326–343 the chain is on the cytoplasmic side; the sequence is LNALLQERGKKSVGAGNA. Residues 344-364 traverse the membrane as a helical segment; sequence IAVQNLGENSAMLLMLGIYSL. Residues 365-366 lie on the Periplasmic side of the membrane; sequence AV. A helical membrane pass occupies residues 367–387; it reads MIGIPVVPIGIGFGALFALAI. The Cytoplasmic portion of the chain corresponds to 388-397; that stretch reads TALWIWQRRH.

It belongs to the major facilitator superfamily. LplT (TC 2.A.1.42) family.

Its subcellular location is the cell inner membrane. In terms of biological role, catalyzes the facilitated diffusion of 2-acyl-glycero-3-phosphoethanolamine (2-acyl-GPE) into the cell. The polypeptide is Lysophospholipid transporter LplT (Escherichia coli (strain SE11)).